The following is a 150-amino-acid chain: Transcriptional regulator MraZ (150 aa).

2 consecutive SpoVT-AbrB domains span residues 6 to 52 (EFFN…PYQE) and 80 to 126 (AVEC…NRTK).

Belongs to the MraZ family. Forms oligomers.

It localises to the cytoplasm. The protein resides in the nucleoid. This is Transcriptional regulator MraZ from Syntrophotalea carbinolica (strain DSM 2380 / NBRC 103641 / GraBd1) (Pelobacter carbinolicus).